The sequence spans 371 residues: MNYSHDNWSAILAHIGKPEELDTSARNAGALTRRREIRDAATLLRLGLAYGPGGMSSLREVTAWAQLHDVATLSDVALLKRLRNAADWFGILAAQTLAVRAAVTGCTSGKRLRLVDGTAISAPGGGSAEWRLHMGYDPHTCQFTDFELTDSRDAERLDRFAQTADEIRIADRGFGSRPECIRSLAFGEADYIVRVHWRGLRWLTAEGMRFDMMGFLRGLDCGKNGETTVMIGNSGNKKAGAPFPARLIAVSLPPEKALISKTRLLSENRRKGRVVQAETLEAAGHVLLLTSLPEDEYSAEQVADCYRLRWQIELAFKRLKSLLHLDALRAKEPELAKAWIFANLLAAFLIDDIIQPSLDFPPRSAGSEKKN.

This sequence belongs to the transposase 11 family.

In terms of biological role, involved in the transposition of the insertion sequence IS421. In Escherichia coli, this protein is Transposase for insertion sequence element IS421.